The primary structure comprises 311 residues: tRNA-cytidine(32) 2-sulfurtransferase (311 aa).

A PP-loop motif motif is present at residues 47–52 (SGGKDS). 3 residues coordinate [4Fe-4S] cluster: C122, C125, and C213.

Belongs to the TtcA family. As to quaternary structure, homodimer. The cofactor is Mg(2+). Requires [4Fe-4S] cluster as cofactor.

Its subcellular location is the cytoplasm. It catalyses the reaction cytidine(32) in tRNA + S-sulfanyl-L-cysteinyl-[cysteine desulfurase] + AH2 + ATP = 2-thiocytidine(32) in tRNA + L-cysteinyl-[cysteine desulfurase] + A + AMP + diphosphate + H(+). It functions in the pathway tRNA modification. Functionally, catalyzes the ATP-dependent 2-thiolation of cytidine in position 32 of tRNA, to form 2-thiocytidine (s(2)C32). The sulfur atoms are provided by the cysteine/cysteine desulfurase (IscS) system. In Escherichia coli O139:H28 (strain E24377A / ETEC), this protein is tRNA-cytidine(32) 2-sulfurtransferase.